The chain runs to 62 residues: Photosystem II reaction center protein Z (62 aa).

Helical transmembrane passes span 8–28 (ALVA…VAYA) and 41–61 (WLGS…NFFV).

It belongs to the PsbZ family. As to quaternary structure, PSII is composed of 1 copy each of membrane proteins PsbA, PsbB, PsbC, PsbD, PsbE, PsbF, PsbH, PsbI, PsbJ, PsbK, PsbL, PsbM, PsbT, PsbX, PsbY, PsbZ, Psb30/Ycf12, peripheral proteins PsbO, CyanoQ (PsbQ), PsbU, PsbV and a large number of cofactors. It forms dimeric complexes.

It localises to the cellular thylakoid membrane. May control the interaction of photosystem II (PSII) cores with the light-harvesting antenna, regulates electron flow through the 2 photosystem reaction centers. PSII is a light-driven water plastoquinone oxidoreductase, using light energy to abstract electrons from H(2)O, generating a proton gradient subsequently used for ATP formation. In Nostoc sp. (strain PCC 7120 / SAG 25.82 / UTEX 2576), this protein is Photosystem II reaction center protein Z.